A 446-amino-acid chain; its full sequence is Tektin-4 (446 aa).

Coiled coils occupy residues 182 to 215 (IRNV…MDYS), 297 to 346 (DAIA…NDKS), and 378 to 422 (SEVG…ANSI).

It belongs to the tektin family.

Its subcellular location is the cytoplasm. The protein localises to the cytoskeleton. It is found in the cilium axoneme. The protein resides in the cell projection. It localises to the cilium. Its subcellular location is the flagellum. Its function is as follows. Microtubule inner protein (MIP) part of the dynein-decorated doublet microtubules (DMTs) in cilia and flagellar axoneme. Forms filamentous polymers in the walls of ciliary and flagellar microtubules. Contributes to normal sperm motility. This Xenopus laevis (African clawed frog) protein is Tektin-4 (tekt4).